The following is an 82-amino-acid chain: Small ribosomal subunit protein bS18 (82 aa).

Residues 1–20 (MSETSSAPVRRPFHRRRKTC) are disordered.

It belongs to the bacterial ribosomal protein bS18 family. Part of the 30S ribosomal subunit. Forms a tight heterodimer with protein bS6.

Binds as a heterodimer with protein bS6 to the central domain of the 16S rRNA, where it helps stabilize the platform of the 30S subunit. The sequence is that of Small ribosomal subunit protein bS18 from Rhizobium johnstonii (strain DSM 114642 / LMG 32736 / 3841) (Rhizobium leguminosarum bv. viciae).